The sequence spans 412 residues: Early growth response protein 2b (412 aa).

Residues 269–299 (YTPQNLPLRPILRPRKYPNRPSKTPVHERPY) form a disordered region. C2H2-type zinc fingers lie at residues 299–323 (YPCPAEGCDRRFSRSDELTRHIRIH), 329–351 (FQCRICMRNFSRSDHLTTHIRTH), and 357–379 (FACDFCGRKFARSDERKRHTKIH). Residues 371 to 412 (ERKRHTKIHLRQKERKSSSSSTGVSSSERGVATSICSSSSNQ) are disordered. Over residues 374–384 (RHTKIHLRQKE) the composition is skewed to basic residues. Residues 388 to 401 (SSSSTGVSSSERGV) are compositionally biased toward low complexity.

The protein belongs to the EGR C2H2-type zinc-finger protein family.

It localises to the nucleus. Sequence-specific DNA-binding transcription factor. Binds to two specific DNA sites located in the promoter region of HOXA4. This Danio rerio (Zebrafish) protein is Early growth response protein 2b (egr2b).